A 298-amino-acid polypeptide reads, in one-letter code: KH domain-containing protein At1g09660/At1g09670 (298 aa).

The KH domain maps to 152–219 (DVPVDKYPSY…EHLCEPLHVL (68 aa)). Positions 266-298 (NGTLREESPSPSLSPCLSPSMSPFNSKRAKTEI) are disordered. S273 and S287 each carry phosphoserine. Over residues 274–288 (PSPSLSPCLSPSMSP) the composition is skewed to low complexity.

It localises to the nucleus. The sequence is that of KH domain-containing protein At1g09660/At1g09670 from Arabidopsis thaliana (Mouse-ear cress).